Consider the following 66-residue polypeptide: U10-theraphotoxin-Cg1a 1 (66 aa).

The N-terminal stretch at 1–21 (MKTSVLFVIFGLALLFCLSFA) is a signal peptide. Positions 22 to 29 (AELEDTGR) are excised as a propeptide. 3 cysteine pairs are disulfide-bonded: Cys-31-Cys-46, Cys-38-Cys-51, and Cys-45-Cys-58.

This sequence belongs to the neurotoxin 10 (Hwtx-1) family. 29 (Jztx-13) subfamily. In terms of tissue distribution, expressed by the venom gland.

It localises to the secreted. Functionally, probable ion channel inhibitor. The protein is U10-theraphotoxin-Cg1a 1 of Chilobrachys guangxiensis (Chinese earth tiger tarantula).